Reading from the N-terminus, the 330-residue chain is DNA-directed RNA polymerase subunit alpha (330 aa).

Residues 1–237 are alpha N-terminal domain (alpha-NTD); the sequence is MYTEINEMLT…RQLHAFVDMK (237 aa). An alpha C-terminal domain (alpha-CTD) region spans residues 251–330; the sequence is FDPVLLRSVD…ENWPPASLGE (80 aa).

This sequence belongs to the RNA polymerase alpha chain family. In terms of assembly, homodimer. The RNAP catalytic core consists of 2 alpha, 1 beta, 1 beta' and 1 omega subunit. When a sigma factor is associated with the core the holoenzyme is formed, which can initiate transcription.

It catalyses the reaction RNA(n) + a ribonucleoside 5'-triphosphate = RNA(n+1) + diphosphate. Its function is as follows. DNA-dependent RNA polymerase catalyzes the transcription of DNA into RNA using the four ribonucleoside triphosphates as substrates. The sequence is that of DNA-directed RNA polymerase subunit alpha from Legionella pneumophila subsp. pneumophila (strain Philadelphia 1 / ATCC 33152 / DSM 7513).